A 364-amino-acid polypeptide reads, in one-letter code: MKVGERHYHTIWLNEDGRSVDIIDQRWLPHEFRVVTLKTVADVADAIRDMWVRGAPLIGVTAAYGVAIAMAKDPSDAHLDAVWEELNETRPTAINLRWALNAMREYLRPLPEAERADAAYKRAAEIAEEDVELNRAIGANGLDVIREIASKKKPGEPVRILTHCNAGWLATVDYGTATAPIYMAVEEGIPVHVYVDETRPRNQGAYLTAWEMNGHGVPHTLIVDNAGGHLMQHGDIDMVIVGTDRTTANGDVCNKIGTYLKALAARDNDVPFYVALPSPTIDWTVQDGVKEIPIEERTADEVSFVQGRAADGSIASVRISPEGSPAANPAFDVTPARLITGLITERGIATPSPEGLKALFPERS.

Residues 53 to 55, Arg90, and Gln203 contribute to the substrate site; that span reads RGA. Asp244 serves as the catalytic Proton donor. 254 to 255 provides a ligand contact to substrate; sequence NK.

This sequence belongs to the eIF-2B alpha/beta/delta subunits family. MtnA subfamily.

It carries out the reaction 5-(methylsulfanyl)-alpha-D-ribose 1-phosphate = 5-(methylsulfanyl)-D-ribulose 1-phosphate. It participates in amino-acid biosynthesis; L-methionine biosynthesis via salvage pathway; L-methionine from S-methyl-5-thio-alpha-D-ribose 1-phosphate: step 1/6. Its function is as follows. Catalyzes the interconversion of methylthioribose-1-phosphate (MTR-1-P) into methylthioribulose-1-phosphate (MTRu-1-P). The chain is Methylthioribose-1-phosphate isomerase from Brucella anthropi (strain ATCC 49188 / DSM 6882 / CCUG 24695 / JCM 21032 / LMG 3331 / NBRC 15819 / NCTC 12168 / Alc 37) (Ochrobactrum anthropi).